The sequence spans 159 residues: 2-C-methyl-D-erythritol 2,4-cyclodiphosphate synthase (159 aa).

A divalent metal cation-binding residues include Asp-10 and His-12. 4-CDP-2-C-methyl-D-erythritol 2-phosphate contacts are provided by residues Asp-10–His-12 and His-36–Ser-37. An a divalent metal cation-binding site is contributed by His-44. 4-CDP-2-C-methyl-D-erythritol 2-phosphate is bound by residues Asp-58–Gly-60, Phe-63–Asp-67, and Arg-144.

The protein belongs to the IspF family. Homotrimer. It depends on a divalent metal cation as a cofactor.

The catalysed reaction is 4-CDP-2-C-methyl-D-erythritol 2-phosphate = 2-C-methyl-D-erythritol 2,4-cyclic diphosphate + CMP. The protein operates within isoprenoid biosynthesis; isopentenyl diphosphate biosynthesis via DXP pathway; isopentenyl diphosphate from 1-deoxy-D-xylulose 5-phosphate: step 4/6. Its function is as follows. Involved in the biosynthesis of isopentenyl diphosphate (IPP) and dimethylallyl diphosphate (DMAPP), two major building blocks of isoprenoid compounds. Catalyzes the conversion of 4-diphosphocytidyl-2-C-methyl-D-erythritol 2-phosphate (CDP-ME2P) to 2-C-methyl-D-erythritol 2,4-cyclodiphosphate (ME-CPP) with a corresponding release of cytidine 5-monophosphate (CMP). The chain is 2-C-methyl-D-erythritol 2,4-cyclodiphosphate synthase from Paraburkholderia phytofirmans (strain DSM 17436 / LMG 22146 / PsJN) (Burkholderia phytofirmans).